Reading from the N-terminus, the 446-residue chain is MKLFGTDGVRGKAGEKLTAFSAMKLGLAAGIYFRKQSKTNKILVGKDTRRSGYMIENALVSGLTAVGYNVIQIGPMPTPAIAYLTEDMRCDAGIMISASHNPFDDNGIKFFNRFGFKLDEEAEREIEAIYADEALLEASQKSGKEIGASKRIDDVVGRYIVHIKNSFPKELSLHGVRMVLDTANGAAYKVAPTIFSELGAEVFVINDAPNGHNINESCGATQPLMLSEEVKRVRADIGFALDGDADRLVVVDERGEVVDGDKLIGALAMHLKNSHTLEKPLAVATVMSNLALEEFLAKAKIKLLRAGVGDKYVLEMMQKEGANFGGEQSGHLIFSDFAKTGDGLVSALQTMAFVLRSGERASRALNIFDLYPQKLVNLPIKQKKELKEIEGFEALMSEIESQGFRQLIRYSGTENKLRILLEGKDGRALEKWMERCVEFFKATLGG.

S99 functions as the Phosphoserine intermediate in the catalytic mechanism. Residues S99, D242, D244, and D246 each coordinate Mg(2+). Phosphoserine is present on S99.

Belongs to the phosphohexose mutase family. Mg(2+) serves as cofactor. Post-translationally, activated by phosphorylation.

The enzyme catalyses alpha-D-glucosamine 1-phosphate = D-glucosamine 6-phosphate. Functionally, catalyzes the conversion of glucosamine-6-phosphate to glucosamine-1-phosphate. The protein is Phosphoglucosamine mutase of Wolinella succinogenes (strain ATCC 29543 / DSM 1740 / CCUG 13145 / JCM 31913 / LMG 7466 / NCTC 11488 / FDC 602W) (Vibrio succinogenes).